A 288-amino-acid chain; its full sequence is Elongation factor Ts (288 aa).

Positions 82-85 (TDFV) are involved in Mg(2+) ion dislocation from EF-Tu.

It belongs to the EF-Ts family.

The protein resides in the cytoplasm. In terms of biological role, associates with the EF-Tu.GDP complex and induces the exchange of GDP to GTP. It remains bound to the aminoacyl-tRNA.EF-Tu.GTP complex up to the GTP hydrolysis stage on the ribosome. This is Elongation factor Ts from Chlorobium luteolum (strain DSM 273 / BCRC 81028 / 2530) (Pelodictyon luteolum).